The chain runs to 185 residues: MAEDRFPGWHGTTILAVRRGGEVVVAGDGQVSLGQTVIKGTARKVRRLSPGGHEVVAGFAGSTADAFTLLERLEKKLEAASGQLARACVELAKDWRMDKYLRNLEAMLIVTDGETLLVITGAGDVLEPEHDVTAIGSGGNFALAAARGLMATDLPAEEVARKAMAIAADICVYTNGNLTVERISK.

The active site involves Thr12. Positions 168, 171, and 174 each coordinate Na(+).

It belongs to the peptidase T1B family. HslV subfamily. A double ring-shaped homohexamer of HslV is capped on each side by a ring-shaped HslU homohexamer. The assembly of the HslU/HslV complex is dependent on binding of ATP.

It is found in the cytoplasm. The enzyme catalyses ATP-dependent cleavage of peptide bonds with broad specificity.. Its activity is regulated as follows. Allosterically activated by HslU binding. In terms of biological role, protease subunit of a proteasome-like degradation complex believed to be a general protein degrading machinery. This Cereibacter sphaeroides (strain ATCC 17025 / ATH 2.4.3) (Rhodobacter sphaeroides) protein is ATP-dependent protease subunit HslV.